Reading from the N-terminus, the 283-residue chain is Probable endonuclease 4 (283 aa).

H66, H106, E141, D174, H177, H211, D224, H226, and E256 together coordinate Zn(2+).

This sequence belongs to the AP endonuclease 2 family. Zn(2+) is required as a cofactor.

It catalyses the reaction Endonucleolytic cleavage to 5'-phosphooligonucleotide end-products.. Functionally, endonuclease IV plays a role in DNA repair. It cleaves phosphodiester bonds at apurinic or apyrimidinic (AP) sites, generating a 3'-hydroxyl group and a 5'-terminal sugar phosphate. In Carboxydothermus hydrogenoformans (strain ATCC BAA-161 / DSM 6008 / Z-2901), this protein is Probable endonuclease 4.